The chain runs to 233 residues: NAD(P)H-hydrate epimerase (233 aa).

Residues 15–218 (SQQFDVELMS…KLQEKYNFIV (204 aa)) enclose the YjeF N-terminal domain. Residue 67 to 71 (NNGGD) participates in (6S)-NADPHX binding. Residues Asn68 and Asp128 each coordinate K(+). (6S)-NADPHX contacts are provided by residues 132 to 138 (GFSFKPP), Tyr143, and Asp161. A K(+)-binding site is contributed by Ser164.

This sequence belongs to the NnrE/AIBP family. It depends on K(+) as a cofactor.

The enzyme catalyses (6R)-NADHX = (6S)-NADHX. It carries out the reaction (6R)-NADPHX = (6S)-NADPHX. In terms of biological role, catalyzes the epimerization of the S- and R-forms of NAD(P)HX, a damaged form of NAD(P)H that is a result of enzymatic or heat-dependent hydration. This is a prerequisite for the S-specific NAD(P)H-hydrate dehydratase to allow the repair of both epimers of NAD(P)HX. The chain is NAD(P)H-hydrate epimerase from Paramecium tetraurelia.